Consider the following 536-residue polypeptide: MPFGKKARHVKAYQFGADAPQEGMEAVLEQHRLRTDYYNALVEMELRQREERTALLANLAAESGLESPNQVYERLKAAGEKGIRKHPEYVAARERQKALYGHPRLLELQSRQREERNALRRSFGAKGLYSSNYLDVERAFDKARQSPELRFRRYSPHEGRLAVLYTEGLPMREIGSDTRVQLPLPDPIIYRDRATRRKHQRVLMKFRVRSVERQPLWITVPVYLHRELPDGVCREVSLHWHRVADRLRWTVSVVVEVEGPPVASPTGRGAVAVDLGWRRVEGGLRAGFWVGEDGAGGEIALSEGDLKQFSKVEDLRSIRDQHLNALKEALAAWLEAPPAPLPDWLAEETKTLPQWRSPARFAALFRRWQSERVHADEAAYGLLEGWHKRDRHLWQYEANLREQMILRRREQYRVLAATLARQYDALIVEDFNLRAAAELDQGGSDLPDAARRYRTIASPSTLRDALVNAFAQRGKPVRKLNPAHTTTDCHACGGALVGDPAKELRLYCPTCERFYDQDENAARNLLRRAQEVQAQV.

Positions 1–59 are recognition domain (REC1-N); that stretch reads MPFGKKARHVKAYQFGADAPQEGMEAVLEQHRLRTDYYNALVEMELRQREERTALLANL. Residues 60-105 form a recognition domain (REC2) region; that stretch reads AAESGLESPNQVYERLKAAGEKGIRKHPEYVAARERQKALYGHPRL. Residues 106-159 form a recognition domain (REC1-C) region; it reads LELQSRQREERNALRRSFGAKGLYSSNYLDVERAFDKARQSPELRFRRYSPHEG. The tract at residues 160-257 is wedge domain (WED); it reads RLAVLYTEGL…RWTVSVVVEV (98 aa). The segment at 258–270 is linker; that stretch reads EGPPVASPTGRGA. The ruvC-I stretch occupies residues 271-481; sequence VAVDLGWRRV…QRGKPVRKLN (211 aa). The target nucleic-acid binding (TNB) stretch occupies residues 482-516; that stretch reads PAHTTTDCHACGGALVGDPAKELRLYCPTCERFYD. Positions 489, 492, 508, and 511 each coordinate Zn(2+). The tract at residues 517–536 is ruvC-II; the sequence is QDENAARNLLRRAQEVQAQV. D518 contacts Mg(2+).

The protein belongs to the CRISPR-associated DNA-binding protein Cas12m family. It depends on Mg(2+) as a cofactor. Zn(2+) is required as a cofactor.

Its activity is regulated as follows. Pre-crRNA processing is inhibited by EDTA. Functionally, CRISPR (clustered regularly interspaced short palindromic repeat), is an adaptive immune system that provides protection against mobile genetic elements (viruses, transposable elements and conjugative plasmids). CRISPR clusters contain sequences complementary to antecedent mobile elements and target invading nucleic acids. CRISPR clusters are transcribed and processed into CRISPR RNA (crRNA). Recognizes a short motif in the CRISPR repeat sequences (the 5' PAM or protospacer adjacent motif, 5'-TT/CN-3' in this organism) to help distinguish self versus nonself, as targets within the bacterial CRISPR locus do not have PAMs. Cas12m-crRNA binds DNA in a PAM-dependent, crRNA-guided fashion. DNA-binding probably inhibits transcription, leading to gene silencing. No dsDNA, ssDNA or RNA nuclease activity is seen for the crRNA-Cas12m complex. Upon expression in E.coli as a CRISPR region preferentially binds to its associated crRNA. Is required to process pre-crRNA to mature crRNA without a tracrRNA; processing is Mg(2+)-dependent and does not require the predicted RuvC domain catalytic site. The chain is CRISPR-associated DNA-binding protein Cas12m from Allomeiothermus silvanus (strain ATCC 700542 / DSM 9946 / NBRC 106475 / NCIMB 13440 / VI-R2) (Thermus silvanus).